The sequence spans 269 residues: Shikimate dehydrogenase (NADP(+)) (269 aa).

Shikimate-binding positions include 19 to 21 and Thr-66; that span reads SLS. The active-site Proton acceptor is the Lys-70. Position 82 (Asp-82) interacts with NADP(+). Residues Asn-91 and Asp-106 each coordinate shikimate. Residues 130–134, 153–158, and Ile-214 contribute to the NADP(+) site; these read GAGGA and NRTKEK. Residue Tyr-216 participates in shikimate binding. Gly-235 lines the NADP(+) pocket. Gln-242 contacts shikimate.

This sequence belongs to the shikimate dehydrogenase family. Homodimer.

The enzyme catalyses shikimate + NADP(+) = 3-dehydroshikimate + NADPH + H(+). Its pathway is metabolic intermediate biosynthesis; chorismate biosynthesis; chorismate from D-erythrose 4-phosphate and phosphoenolpyruvate: step 4/7. In terms of biological role, involved in the biosynthesis of the chorismate, which leads to the biosynthesis of aromatic amino acids. Catalyzes the reversible NADPH linked reduction of 3-dehydroshikimate (DHSA) to yield shikimate (SA). In Aquifex aeolicus (strain VF5), this protein is Shikimate dehydrogenase (NADP(+)).